Consider the following 247-residue polypeptide: PF03932 family protein CutC (247 aa).

This sequence belongs to the CutC family.

It localises to the cytoplasm. The polypeptide is PF03932 family protein CutC (Aliivibrio fischeri (strain MJ11) (Vibrio fischeri)).